Here is a 97-residue protein sequence, read N- to C-terminus: YcgL domain-containing protein PFL_1496 (97 aa).

The region spanning 3–87 (RICSIYKSPR…AEDEYIEHLP (85 aa)) is the YcgL domain.

This chain is YcgL domain-containing protein PFL_1496, found in Pseudomonas fluorescens (strain ATCC BAA-477 / NRRL B-23932 / Pf-5).